Here is a 436-residue protein sequence, read N- to C-terminus: NAD(P)-dependent benzaldehyde dehydrogenase (436 aa).

Residues 117-119 (GPF), 143-147 (KPSET), 175-178 (RDEN), 193-194 (GS), 215-216 (EL), C249, and 337-339 (ELF) each bind NADP(+). Catalysis depends on residues E215 and C249.

It belongs to the aldehyde dehydrogenase family.

The catalysed reaction is benzaldehyde + NAD(+) + H2O = benzoate + NADH + 2 H(+). It carries out the reaction benzaldehyde + NADP(+) + H2O = benzoate + NADPH + 2 H(+). It functions in the pathway aromatic compound metabolism; (R)-mandelate degradation; benzoate from (R)-mandelate: step 4/4. In terms of biological role, NAD or NADP-dependent benzaldehyde dehydrogenase that catalyzes the conversion of benzaldehyde into benzoate in the (R)-mandelate degradation pathway. This chain is NAD(P)-dependent benzaldehyde dehydrogenase (mdlD), found in Pseudomonas putida (Arthrobacter siderocapsulatus).